A 379-amino-acid polypeptide reads, in one-letter code: Spermidine/putrescine import ATP-binding protein PotA (379 aa).

The ABC transporter domain maps to 10 to 240; the sequence is VTIDQVSKAY…PATDFVAKFI (231 aa). 42–49 provides a ligand contact to ATP; sequence GPSGCGKT.

Belongs to the ABC transporter superfamily. Spermidine/putrescine importer (TC 3.A.1.11.1) family. The complex is composed of two ATP-binding proteins (PotA), two transmembrane proteins (PotB and PotC) and a solute-binding protein (PotD).

The protein resides in the cell inner membrane. It carries out the reaction ATP + H2O + polyamine-[polyamine-binding protein]Side 1 = ADP + phosphate + polyamineSide 2 + [polyamine-binding protein]Side 1.. Part of the ABC transporter complex PotABCD involved in spermidine/putrescine import. Responsible for energy coupling to the transport system. This Treponema pallidum (strain Nichols) protein is Spermidine/putrescine import ATP-binding protein PotA.